The following is a 287-amino-acid chain: Putative S-adenosyl-L-methionine-dependent methyltransferase SACE_1742 (287 aa).

Residues Asp119 and 148–149 each bind S-adenosyl-L-methionine; that span reads DL.

This sequence belongs to the UPF0677 family.

Its function is as follows. Exhibits S-adenosyl-L-methionine-dependent methyltransferase activity. This Saccharopolyspora erythraea (strain ATCC 11635 / DSM 40517 / JCM 4748 / NBRC 13426 / NCIMB 8594 / NRRL 2338) protein is Putative S-adenosyl-L-methionine-dependent methyltransferase SACE_1742.